Consider the following 627-residue polypeptide: 2-oxoacid:ferredoxin oxidoreductase 1, subunit alpha (627 aa).

A YPITP motif motif is present at residues 253-257 (YPITP). 2 residues coordinate substrate: T256 and R344.

Heterodimer composed of an alpha and a beta subunit.

The catalysed reaction is a 2-oxocarboxylate + 2 oxidized [2Fe-2S]-[ferredoxin] + CoA = an acyl-CoA + 2 reduced [2Fe-2S]-[ferredoxin] + CO2 + H(+). Inhibited by low concentration of 4-fluoro-7-nitrobenzofurazan (NBD-F). In terms of biological role, catalyzes the coenzyme A-dependent oxidative decarboxylation of different 2-oxoacids such as 2-oxoglutarate, pyruvate and 2-oxobutyrate to form their CoA derivatives. This is 2-oxoacid:ferredoxin oxidoreductase 1, subunit alpha from Sulfurisphaera tokodaii (strain DSM 16993 / JCM 10545 / NBRC 100140 / 7) (Sulfolobus tokodaii).